The chain runs to 221 residues: Cutinase 3 (221 aa).

A signal peptide spans 1–17; the sequence is MRFHTILLAALASLVIA. Intrachain disulfides connect C44-C122 and C70-C84. S133 functions as the Nucleophile in the catalytic mechanism. C184 and C191 form a disulfide bridge. Residue D188 is part of the active site. Catalysis depends on H201, which acts as the Proton donor/acceptor.

It belongs to the cutinase family.

The protein localises to the secreted. The catalysed reaction is cutin + H2O = cutin monomers.. Catalyzes the hydrolysis of complex carboxylic polyesters found in the cell wall of plants. Degrades cutin, a macromolecule that forms the structure of the plant cuticle. Also degrades suberin, a specialized macromolecule found in the cell wall of various plant tissues. The polypeptide is Cutinase 3 (Emericella nidulans (strain FGSC A4 / ATCC 38163 / CBS 112.46 / NRRL 194 / M139) (Aspergillus nidulans)).